Consider the following 436-residue polypeptide: Histone acetyltransferase type B subunit 2 (436 aa).

WD repeat units lie at residues 136–176 (DHKG…SLPT), 187–227 (GHTK…KGNK), 237–277 (HHSS…TTRA), 284–324 (QHRD…TKLH), and 328–368 (SHTD…EEQT). The tract at residues 370–374 (EDAQD) is interaction with the histone H4 N-terminus. A WD 6 repeat occupies 385–425 (GHTNRISDFSWNLNDPWVLCSAAEDNLLQVWKVADAIVGKD).

This sequence belongs to the WD repeat RBAP46/RBAP48/MSI1 family. In terms of assembly, component of the HAT-B complex composed of at least hat1 and hat2. The HAT-B complex binds to histone H4 tail.

It localises to the cytoplasm. Its subcellular location is the nucleus. Functionally, regulatory subunit of the histone acetylase B (HAT-B) complex. The complex acetylates 'Lys-12' of histone H4 which is required for telomeric silencing. The protein is Histone acetyltransferase type B subunit 2 (hat2) of Aspergillus fumigatus (strain ATCC MYA-4609 / CBS 101355 / FGSC A1100 / Af293) (Neosartorya fumigata).